Reading from the N-terminus, the 129-residue chain is Phosphoribosyl-AMP cyclohydrolase (129 aa).

Residue Asp85 coordinates Mg(2+). Cys86 is a binding site for Zn(2+). 2 residues coordinate Mg(2+): Asp87 and Asp89. Zn(2+)-binding residues include Cys102 and Cys109.

This sequence belongs to the PRA-CH family. Homodimer. Mg(2+) serves as cofactor. Zn(2+) is required as a cofactor.

It localises to the cytoplasm. The catalysed reaction is 1-(5-phospho-beta-D-ribosyl)-5'-AMP + H2O = 1-(5-phospho-beta-D-ribosyl)-5-[(5-phospho-beta-D-ribosylamino)methylideneamino]imidazole-4-carboxamide. It participates in amino-acid biosynthesis; L-histidine biosynthesis; L-histidine from 5-phospho-alpha-D-ribose 1-diphosphate: step 3/9. Functionally, catalyzes the hydrolysis of the adenine ring of phosphoribosyl-AMP. The chain is Phosphoribosyl-AMP cyclohydrolase from Methanococcus maripaludis (strain C5 / ATCC BAA-1333).